Here is a 242-residue protein sequence, read N- to C-terminus: MISLVFVLLIGAAFATEDDKIVGGYECKAYSQTHQVSLNSGYHFCGGSLVNENWVVSAAHCYKSRVEVRLGEHNIKVTEGSEQFISSSRVIRHPNYSSYNIDNDIMLIKLSKPATLNTYVQPVALPTSCAPAGTMCTVSGWGNTMSSTADSNKLQCLNIPILSYSDCNNSYPGMITNAMFCAGYLEGGKDSCQGDSGGPVVCNGELQGVVSWGYGCAEPGNPGVYAKVCIFNDWLTSTMASY.

The N-terminal stretch at 1 to 15 is a signal peptide; it reads MISLVFVLLIGAAFA. The propeptide at 16-20 is activation peptide; sequence TEDDK. The Peptidase S1 domain occupies 21 to 240; the sequence is IVGGYECKAY…FNDWLTSTMA (220 aa). 6 cysteine pairs are disulfide-bonded: C27–C156, C45–C61, C129–C229, C136–C202, C167–C181, and C192–C216. The active-site Charge relay system is the H60. Ca(2+) contacts are provided by E72, N74, V77, and E82. The active-site Charge relay system is the D104. Residue S196 is the Charge relay system of the active site.

This sequence belongs to the peptidase S1 family. The cofactor is Ca(2+).

It is found in the secreted. It localises to the extracellular space. The catalysed reaction is Preferential cleavage: Arg-|-Xaa, Lys-|-Xaa.. In Salmo salar (Atlantic salmon), this protein is Trypsin-1.